The sequence spans 200 residues: Probable GTP-binding protein EngB (200 aa).

The region spanning 22-197 is the EngB-type G domain; the sequence is NLPEYAFIGR…LDYIDSINRS (176 aa). GTP-binding positions include 30–37, 57–61, 75–78, 142–145, and 173–178; these read GRSNVGKS, GKTLL, DLPG, TKAD, and HFVSSS. Positions 37 and 59 each coordinate Mg(2+).

It belongs to the TRAFAC class TrmE-Era-EngA-EngB-Septin-like GTPase superfamily. EngB GTPase family. It depends on Mg(2+) as a cofactor.

Necessary for normal cell division and for the maintenance of normal septation. The protein is Probable GTP-binding protein EngB of Phocaeicola vulgatus (strain ATCC 8482 / DSM 1447 / JCM 5826 / CCUG 4940 / NBRC 14291 / NCTC 11154) (Bacteroides vulgatus).